Here is a 29-residue protein sequence, read N- to C-terminus: Cytolysin Oshem 1 (29 aa).

The protein resides in the secreted. The protein localises to the nematocyst. It localises to the target cell membrane. Cytolysin that shows moderate hemolysis and moderate myonecrosis. This Olindias sambaquiensis (Hydromedusa) protein is Cytolysin Oshem 1.